The primary structure comprises 141 residues: Large ribosomal subunit protein uL14 (141 aa).

The protein belongs to the universal ribosomal protein uL14 family. As to quaternary structure, part of the 50S ribosomal subunit. Forms a cluster with proteins L3 and L24e, part of which may contact the 16S rRNA in 2 intersubunit bridges.

In terms of biological role, binds to 23S rRNA. Forms part of two intersubunit bridges in the 70S ribosome. This Pyrococcus horikoshii (strain ATCC 700860 / DSM 12428 / JCM 9974 / NBRC 100139 / OT-3) protein is Large ribosomal subunit protein uL14.